The following is a 177-amino-acid chain: Early nodulin-like protein 15 (177 aa).

Positions 1-24 are cleaved as a signal peptide; the sequence is MASSSLLVTIFLCISVFFFSSVNA. The Phytocyanin domain maps to 25–129; sequence NEVTVGGKSG…GQKLRLVVIT (105 aa). An intrachain disulfide couples cysteine 83 to cysteine 117. Asparagine 84 carries an N-linked (GlcNAc...) asparagine glycan. The GPI-anchor amidated serine moiety is linked to residue serine 153. The propeptide at 154 to 177 is removed in mature form; the sequence is GAAKLAGGFSVVFGLVLGLWAFFF.

Belongs to the early nodulin-like (ENODL) family. In terms of tissue distribution, mostly expressed in seedlings, siliques and flowers, and, to a lower extent, in roots, stems and seeds, but barely in leaves.

Its subcellular location is the cell membrane. Its function is as follows. May act as a carbohydrate transporter. Required, together with ENODL11, ENODL12, ENODL13, ENODL14 and ENODL15, for male-female communication and pollen tube reception and burst at the synergid cell surface of the female gametophyte. The sequence is that of Early nodulin-like protein 15 from Arabidopsis thaliana (Mouse-ear cress).